We begin with the raw amino-acid sequence, 124 residues long: ATP synthase epsilon chain (124 aa).

Residues 97 to 124 (ARVREASSEEEKSRAESELRAVKRSKEK) are disordered.

Belongs to the ATPase epsilon chain family. F-type ATPases have 2 components, CF(1) - the catalytic core - and CF(0) - the membrane proton channel. CF(1) has five subunits: alpha(3), beta(3), gamma(1), delta(1), epsilon(1). CF(0) has three main subunits: a, b and c.

The protein resides in the cell membrane. Produces ATP from ADP in the presence of a proton gradient across the membrane. The sequence is that of ATP synthase epsilon chain from Corynebacterium urealyticum (strain ATCC 43042 / DSM 7109).